The chain runs to 593 residues: Cyclin-dependent kinase-like 3 (593 aa).

The 283-residue stretch at 4–286 folds into the Protein kinase domain; that stretch reads YETLGKVGEG…STDLLHHDYF (283 aa). ATP-binding positions include 10 to 18 and Lys-33; that span reads VGEGSYGTV. The [NKR]KIAxRE signature appears at 45 to 51; that stretch reads KIATREI. The Proton acceptor role is filled by Asp-125. Phosphothreonine is present on Thr-158. Tyr-160 is modified (phosphotyrosine). Positions 368-403 are enriched in basic and acidic residues; sequence GKGDVPDLKKTESEGEHRQQGTAEDTHPTSLDRKPS. Residues 368–512 are disordered; the sequence is GKGDVPDLKK…NDQIASGNKR (145 aa). Positions 436 to 452 are enriched in low complexity; it reads NLTSSNLLAANPSSNLS. Composition is skewed to polar residues over residues 468 to 491 and 499 to 508; these read SSQT…QVQT and RTGQNDQIAS.

It belongs to the protein kinase superfamily. CMGC Ser/Thr protein kinase family. CDC2/CDKX subfamily. As to expression, highly expressed in brain, and to a lower extent in heart and testis.

It is found in the nucleus. The protein localises to the cytoplasm. It carries out the reaction L-seryl-[protein] + ATP = O-phospho-L-seryl-[protein] + ADP + H(+). The enzyme catalyses L-threonyl-[protein] + ATP = O-phospho-L-threonyl-[protein] + ADP + H(+). The sequence is that of Cyclin-dependent kinase-like 3 from Rattus norvegicus (Rat).